The primary structure comprises 122 residues: Small ribosomal subunit protein uS13 (122 aa).

The tract at residues 97–122 is disordered; sequence PVRGQRTHTNARTRKGPAKAIAGKKK.

This sequence belongs to the universal ribosomal protein uS13 family. In terms of assembly, part of the 30S ribosomal subunit. Forms a loose heterodimer with protein S19. Forms two bridges to the 50S subunit in the 70S ribosome.

Functionally, located at the top of the head of the 30S subunit, it contacts several helices of the 16S rRNA. In the 70S ribosome it contacts the 23S rRNA (bridge B1a) and protein L5 of the 50S subunit (bridge B1b), connecting the 2 subunits; these bridges are implicated in subunit movement. Contacts the tRNAs in the A and P-sites. The sequence is that of Small ribosomal subunit protein uS13 from Brucella anthropi (strain ATCC 49188 / DSM 6882 / CCUG 24695 / JCM 21032 / LMG 3331 / NBRC 15819 / NCTC 12168 / Alc 37) (Ochrobactrum anthropi).